The chain runs to 446 residues: ATP synthase subunit b-delta (446 aa).

The ATP synthase subunit b stretch occupies residues 1–168; the sequence is MSTFIGQLVG…PKGADVEYPL (168 aa). A helical membrane pass occupies residues 4–24; sequence FIGQLVGFAAIVYLVWWYVVP. Residues 169–446 are ATP synthase subunit delta; sequence LAKMRSASRR…LVAAEAALPD (278 aa).

This sequence in the N-terminal section; belongs to the ATPase B chain family. It in the C-terminal section; belongs to the ATPase delta chain family. As to quaternary structure, F-type ATPases have 2 components, F(1) - the catalytic core - and F(0) - the membrane proton channel. F(1) has five subunits: alpha(3), beta(3), gamma(1), delta(1), epsilon(1). F(0) has three main subunits: a(1), b(2) and c(10-14). The alpha and beta chains form an alternating ring which encloses part of the gamma chain. F(1) is attached to F(0) by a central stalk formed by the gamma and epsilon chains, while a peripheral stalk is formed by the delta and b chains.

The protein resides in the cell membrane. In terms of biological role, f(1)F(0) ATP synthase produces ATP from ADP in the presence of a proton or sodium gradient. F-type ATPases consist of two structural domains, F(1) containing the extramembraneous catalytic core and F(0) containing the membrane proton channel, linked together by a central stalk and a peripheral stalk. During catalysis, ATP synthesis in the catalytic domain of F(1) is coupled via a rotary mechanism of the central stalk subunits to proton translocation. Functionally, this fusion protein includes a component of the F(0) channel (subunit b) and of the F(1) subunit (subunit delta). Two copies of subunit b and one of delta together form the peripheral 'stator' stalk which links F(1) to F(0). The polypeptide is ATP synthase subunit b-delta (atpFH) (Mycobacterium leprae (strain Br4923)).